A 298-amino-acid chain; its full sequence is Cyclic dof factor 1 (298 aa).

Residues 27–46 (EEEEKNQNKTLTDQSEKDKT) form a disordered region. A Dof-type zinc finger spans residues 54 to 108 (LPCPRCNSMETKFCYYNNYNVNQPRHFCKACQRYWTSGGTMRSVPIGAGRRKNKN). Residues cysteine 56, cysteine 59, cysteine 81, and cysteine 84 each coordinate Zn(2+). The disordered stretch occupies residues 200-231 (SSSPTSTLGKHSRDEDETVKQKQRNGSVLVPK). A compositionally biased stretch (basic and acidic residues) spans 210–219 (HSRDEDETVK).

In terms of assembly, interacts with ADO2 (via kelch repeats), ADO3 (via kelch repeats) and GI (via N-terminus). Post-translationally, ubiquitinated. As to expression, expressed in the vascular tissues of cotyledons, leaves and hypocotyls and in stomata. Not detected in roots.

It is found in the nucleus. Transcription factor that binds specifically to a 5'-AA[AG]G-3' consensus core sequence. A flanking TGT sequence contributes to the specificity of binding. Regulates a photoperiodic flowering response. Transcriptional repressor of 'CONSTANS' expression. The DNA-binding ability is not modulated by 'GIGANTEA' but the stability of CDF1 is controlled by the proteasome-dependent pathway. Ubiquitinated by the SCF(ADO3) E3 ubiquitin ligase complex. Binds to the FT promoter in the morning. This is Cyclic dof factor 1 (CDF1) from Arabidopsis thaliana (Mouse-ear cress).